The chain runs to 209 residues: GTP cyclohydrolase-2 (209 aa).

A GTP-binding site is contributed by 49–53; the sequence is RIHSE. 3 residues coordinate Zn(2+): Cys-54, Cys-65, and Cys-67. GTP-binding positions include Gln-70, 92–94, and Thr-114; that span reads EGR. Asp-126 acts as the Proton acceptor in catalysis. Arg-128 serves as the catalytic Nucleophile. The GTP site is built by Thr-149 and Lys-154.

It belongs to the GTP cyclohydrolase II family. Zn(2+) is required as a cofactor.

It carries out the reaction GTP + 4 H2O = 2,5-diamino-6-hydroxy-4-(5-phosphoribosylamino)-pyrimidine + formate + 2 phosphate + 3 H(+). It participates in cofactor biosynthesis; riboflavin biosynthesis; 5-amino-6-(D-ribitylamino)uracil from GTP: step 1/4. Functionally, catalyzes the conversion of GTP to 2,5-diamino-6-ribosylamino-4(3H)-pyrimidinone 5'-phosphate (DARP), formate and pyrophosphate. The chain is GTP cyclohydrolase-2 from Shewanella halifaxensis (strain HAW-EB4).